The primary structure comprises 438 residues: 3-phosphoshikimate 1-carboxyvinyltransferase 1 (438 aa).

Positions 30, 31, and 35 each coordinate 3-phosphoshikimate. Lys30 lines the phosphoenolpyruvate pocket. Residues Gly104 and Arg132 each contribute to the phosphoenolpyruvate site. Residues Ser178, Ser179, Gln180, Ser207, Glu326, and His353 each coordinate 3-phosphoshikimate. Gln180 contacts phosphoenolpyruvate. Glu326 acts as the Proton acceptor in catalysis. Residues Arg357, Arg398, and Lys423 each contribute to the phosphoenolpyruvate site.

The protein belongs to the EPSP synthase family. In terms of assembly, monomer.

It is found in the cytoplasm. The catalysed reaction is 3-phosphoshikimate + phosphoenolpyruvate = 5-O-(1-carboxyvinyl)-3-phosphoshikimate + phosphate. It participates in metabolic intermediate biosynthesis; chorismate biosynthesis; chorismate from D-erythrose 4-phosphate and phosphoenolpyruvate: step 6/7. In terms of biological role, catalyzes the transfer of the enolpyruvyl moiety of phosphoenolpyruvate (PEP) to the 5-hydroxyl of shikimate-3-phosphate (S3P) to produce enolpyruvyl shikimate-3-phosphate and inorganic phosphate. The protein is 3-phosphoshikimate 1-carboxyvinyltransferase 1 of Streptomyces coelicolor (strain ATCC BAA-471 / A3(2) / M145).